The chain runs to 142 residues: Putative pre-16S rRNA nuclease (142 aa).

It belongs to the YqgF nuclease family.

It is found in the cytoplasm. In terms of biological role, could be a nuclease involved in processing of the 5'-end of pre-16S rRNA. This Nitratidesulfovibrio vulgaris (strain DSM 19637 / Miyazaki F) (Desulfovibrio vulgaris) protein is Putative pre-16S rRNA nuclease.